The primary structure comprises 174 residues: MFIGDASILKPIQWCATEHPELPADIADWLMELGSMTRRFEQHCQRVHVEPQRECFITRDALGEEAEHLPVSQRYWLREIVLFGDNVPWLLGRTVIPEETLSGPDRALVDLGTLPLGRYLFSGDALTRDYIHVGRQDNLWARRSLLRLSGNPLLLTEVFLPASPLYTHCDSIPK.

Substrate is bound by residues M36, R78, L116, and E157.

This sequence belongs to the UbiC family. Monomer.

It localises to the cytoplasm. It catalyses the reaction chorismate = 4-hydroxybenzoate + pyruvate. Its pathway is cofactor biosynthesis; ubiquinone biosynthesis. Its function is as follows. Removes the pyruvyl group from chorismate, with concomitant aromatization of the ring, to provide 4-hydroxybenzoate (4HB) for the ubiquinone pathway. This Yersinia pestis bv. Antiqua (strain Angola) protein is Chorismate pyruvate-lyase.